Reading from the N-terminus, the 248-residue chain is 2,3-bisphosphoglycerate-dependent phosphoglycerate mutase (248 aa).

Residues 8 to 15 (RHGESQWN), 21 to 22 (TG), Arg-60, 87 to 90 (ERHY), Lys-98, 114 to 115 (RR), and 183 to 184 (GN) contribute to the substrate site. His-9 acts as the Tele-phosphohistidine intermediate in catalysis. Glu-87 serves as the catalytic Proton donor/acceptor.

The protein belongs to the phosphoglycerate mutase family. BPG-dependent PGAM subfamily. As to quaternary structure, homodimer.

It catalyses the reaction (2R)-2-phosphoglycerate = (2R)-3-phosphoglycerate. It functions in the pathway carbohydrate degradation; glycolysis; pyruvate from D-glyceraldehyde 3-phosphate: step 3/5. In terms of biological role, catalyzes the interconversion of 2-phosphoglycerate and 3-phosphoglycerate. The protein is 2,3-bisphosphoglycerate-dependent phosphoglycerate mutase of Alteromonas mediterranea (strain DSM 17117 / CIP 110805 / LMG 28347 / Deep ecotype).